Reading from the N-terminus, the 133-residue chain is Mitochondrial import inner membrane translocase subunit TIM17-3 (133 aa).

Helical transmembrane passes span Ile15 to Phe35, Gly63 to Ile83, Trp90 to Ile105, and Ser115 to Pro128.

The protein belongs to the Tim17/Tim22/Tim23 family. In terms of assembly, component of the TIM17:23 complex at least composed of TIM23, TIM17 and TIM50. The complex interacts with the TIM44 component of the PAM complex. In terms of tissue distribution, expressed in cotyledons, roots, flowers and leaves.

The protein localises to the mitochondrion inner membrane. Essential component of the TIM17:23 complex, a complex that mediates the translocation of transit peptide-containing proteins across the mitochondrial inner membrane. Links the inner and outer membranes. This is Mitochondrial import inner membrane translocase subunit TIM17-3 (TIM17-3) from Arabidopsis thaliana (Mouse-ear cress).